A 109-amino-acid chain; its full sequence is Ribonuclease P protein component (109 aa).

This sequence belongs to the RnpA family. Consists of a catalytic RNA component (M1 or rnpB) and a protein subunit.

The enzyme catalyses Endonucleolytic cleavage of RNA, removing 5'-extranucleotides from tRNA precursor.. Its function is as follows. RNaseP catalyzes the removal of the 5'-leader sequence from pre-tRNA to produce the mature 5'-terminus. It can also cleave other RNA substrates such as 4.5S RNA. The protein component plays an auxiliary but essential role in vivo by binding to the 5'-leader sequence and broadening the substrate specificity of the ribozyme. This Mycoplasma mycoides subsp. mycoides SC (strain CCUG 32753 / NCTC 10114 / PG1) protein is Ribonuclease P protein component.